We begin with the raw amino-acid sequence, 142 residues long: MEKKVYYSIVSSTRFSRNEENRTIIEDNIKKGENHFLIRNDDYGECFEVDFEKNITEEENENWILEAVIDFAKKYRITEFELWKKHEGDSTYDKGFGIVIEGSMDNPILKFKEVYSGSLDDWNITWGKGKQTYEKIYFKLAL.

This is an uncharacterized protein from Bacillus anthracis.